Reading from the N-terminus, the 862-residue chain is Taxadiene synthase (862 aa).

Positions 45–66 are disordered; sequence RVKMSRGSGGPGPVVMMSSSTG. The Mg(2+) site is built by Asp-613, Asp-617, Asn-757, Thr-761, and Glu-765. Residues 613–617 carry the DDXXD motif motif; it reads DDMAD.

The protein belongs to the terpene synthase family. The cofactor is Mg(2+).

The catalysed reaction is (2E,6E,10E)-geranylgeranyl diphosphate = taxa-4(5),11(12)-diene + diphosphate. The protein operates within alkaloid biosynthesis; taxol biosynthesis; taxa-4(20),11-dien-5alpha-ol from geranylgeranyl diphosphate: step 1/2. In terms of biological role, catalyzes the cyclization of the ubiquitous isoprenoid intermediate geranylgeranyl diphosphate to taxa-4,11-diene, the parent olefin with a taxane skeleton. In Taxus chinensis (Chinese yew), this protein is Taxadiene synthase (TDC1).